We begin with the raw amino-acid sequence, 230 residues long: 3,4-dihydroxy-2-butanone 4-phosphate synthase (230 aa).

Residues 42 to 43, Asp-47, 155 to 159, and Glu-179 each bind D-ribulose 5-phosphate; these read RE and RRGHT. Glu-43 serves as a coordination point for Mg(2+). Position 158 (His-158) interacts with Mg(2+).

The protein belongs to the DHBP synthase family. As to quaternary structure, homodimer. Mg(2+) is required as a cofactor. Mn(2+) serves as cofactor.

The catalysed reaction is D-ribulose 5-phosphate = (2S)-2-hydroxy-3-oxobutyl phosphate + formate + H(+). It functions in the pathway cofactor biosynthesis; riboflavin biosynthesis; 2-hydroxy-3-oxobutyl phosphate from D-ribulose 5-phosphate: step 1/1. Functionally, catalyzes the conversion of D-ribulose 5-phosphate to formate and 3,4-dihydroxy-2-butanone 4-phosphate. The polypeptide is 3,4-dihydroxy-2-butanone 4-phosphate synthase (Bordetella bronchiseptica (strain ATCC BAA-588 / NCTC 13252 / RB50) (Alcaligenes bronchisepticus)).